A 220-amino-acid chain; its full sequence is Fructose-6-phosphate aldolase 2 (220 aa).

The Schiff-base intermediate with substrate role is filled by K85.

It belongs to the transaldolase family. Type 3A subfamily. In terms of assembly, homodecamer.

It localises to the cytoplasm. The catalysed reaction is beta-D-fructose 6-phosphate = dihydroxyacetone + D-glyceraldehyde 3-phosphate. In terms of biological role, catalyzes the reversible formation of fructose 6-phosphate from dihydroxyacetone and D-glyceraldehyde 3-phosphate via an aldolization reaction. This chain is Fructose-6-phosphate aldolase 2 (fsaB), found in Escherichia coli O6:H1 (strain CFT073 / ATCC 700928 / UPEC).